Here is a 605-residue protein sequence, read N- to C-terminus: Endonuclease 8-like 3 (605 aa).

The Schiff-base intermediate with DNA; via amino nitrogen role is filled by Val-2. Asn-192 and Arg-271 together coordinate DNA. Residues 247–281 (KVYKRPNCGQCHCRITVCRFGDNNRMTYFCPHCQK) form an FPG-type zinc finger. A RanBP2-type zinc finger spans residues 317 to 346 (SEEHWTCVVCTLINKPSSKACDACLTSRPI). The residue at position 450 (Ser-450) is a Phosphoserine. The interval 456 to 477 (ESKLFSPAHKKPKTAQYSSPEL) is disordered. Zn(2+) contacts are provided by Cys-507, His-510, Cys-533, Cys-541, Cys-554, His-556, Cys-579, and Cys-587. 2 GRF-type zinc fingers span residues 507 to 550 (CSKH…ADLS) and 554 to 596 (CNHG…AENG).

The protein belongs to the FPG family. As to expression, expressed in keratinocytes and embryonic fibroblasts (at protein level). Also detected in thymus, testis and fetal lung primary fibroblasts.

It localises to the nucleus. The protein resides in the chromosome. It carries out the reaction 2'-deoxyribonucleotide-(2'-deoxyribose 5'-phosphate)-2'-deoxyribonucleotide-DNA = a 3'-end 2'-deoxyribonucleotide-(2,3-dehydro-2,3-deoxyribose 5'-phosphate)-DNA + a 5'-end 5'-phospho-2'-deoxyribonucleoside-DNA + H(+). Its function is as follows. DNA glycosylase which prefers single-stranded DNA (ssDNA), or partially ssDNA structures such as bubble and fork structures, to double-stranded DNA (dsDNA). Mediates interstrand cross-link repair in response to replication stress: acts by mediating DNA glycosylase activity, cleaving one of the two N-glycosyl bonds comprising the interstrand cross-link, which avoids the formation of a double-strand break but generates an abasic site that is bypassed by translesion synthesis polymerases. In vitro, displays strong glycosylase activity towards the hydantoin lesions spiroiminodihydantoin (Sp) and guanidinohydantoin (Gh) in both ssDNA and dsDNA; also recognizes FapyA, FapyG, 5-OHU, 5-OHC, 5-OHMH, Tg and 8-oxoA lesions in ssDNA. No activity on 8-oxoG detected. Also shows weak DNA-(apurinic or apyrimidinic site) lyase activity. In vivo, appears to be the primary enzyme involved in removing Sp and Gh from ssDNA in neonatal tissues. The sequence is that of Endonuclease 8-like 3 (NEIL3) from Homo sapiens (Human).